Here is a 412-residue protein sequence, read N- to C-terminus: L-cysteine:1D-myo-inositol 2-amino-2-deoxy-alpha-D-glucopyranoside ligase (412 aa).

A Zn(2+)-binding site is contributed by Cys-43. Residues 43–46, Thr-58, and 81–83 each bind L-cysteinyl-5'-AMP; these read CGIT and NVT. Positions 45 to 55 match the 'HIGH' region motif; the sequence is ITPYDATHLGH. The short motif at 187–192 is the 'ERGGDP' region element; the sequence is ERGGDP. Trp-227 is a binding site for L-cysteinyl-5'-AMP. Cys-231 contributes to the Zn(2+) binding site. 249–251 is an L-cysteinyl-5'-AMP binding site; the sequence is GSD. A Zn(2+)-binding site is contributed by His-256. L-cysteinyl-5'-AMP is bound at residue Ile-283. Residues 289-293 carry the 'KMSKS' region motif; sequence KMSKS.

Belongs to the class-I aminoacyl-tRNA synthetase family. MshC subfamily. Monomer. It depends on Zn(2+) as a cofactor.

The enzyme catalyses 1D-myo-inositol 2-amino-2-deoxy-alpha-D-glucopyranoside + L-cysteine + ATP = 1D-myo-inositol 2-(L-cysteinylamino)-2-deoxy-alpha-D-glucopyranoside + AMP + diphosphate + H(+). Its function is as follows. Catalyzes the ATP-dependent condensation of GlcN-Ins and L-cysteine to form L-Cys-GlcN-Ins. The protein is L-cysteine:1D-myo-inositol 2-amino-2-deoxy-alpha-D-glucopyranoside ligase of Saccharopolyspora erythraea (strain ATCC 11635 / DSM 40517 / JCM 4748 / NBRC 13426 / NCIMB 8594 / NRRL 2338).